Consider the following 185-residue polypeptide: Large ribosomal subunit protein uL5 (185 aa).

It belongs to the universal ribosomal protein uL5 family. As to quaternary structure, part of the 50S ribosomal subunit; part of the 5S rRNA/L5/L18/L25 subcomplex. Contacts the 5S rRNA and the P site tRNA. Forms a bridge to the 30S subunit in the 70S ribosome.

Its function is as follows. This is one of the proteins that bind and probably mediate the attachment of the 5S RNA into the large ribosomal subunit, where it forms part of the central protuberance. In the 70S ribosome it contacts protein S13 of the 30S subunit (bridge B1b), connecting the 2 subunits; this bridge is implicated in subunit movement. Contacts the P site tRNA; the 5S rRNA and some of its associated proteins might help stabilize positioning of ribosome-bound tRNAs. This chain is Large ribosomal subunit protein uL5, found in Caulobacter sp. (strain K31).